The sequence spans 264 residues: Thymidylate synthase (264 aa).

Arg21 contributes to the dUMP binding site. His51 serves as a coordination point for (6R)-5,10-methylene-5,6,7,8-tetrahydrofolate. Residue Arg126–Arg127 participates in dUMP binding. Cys146 acts as the Nucleophile in catalysis. DUMP contacts are provided by residues Arg166 to Asp169, Asn177, and His207 to Tyr209. Asp169 serves as a coordination point for (6R)-5,10-methylene-5,6,7,8-tetrahydrofolate. Ala263 is a binding site for (6R)-5,10-methylene-5,6,7,8-tetrahydrofolate.

The protein belongs to the thymidylate synthase family. Bacterial-type ThyA subfamily. In terms of assembly, homodimer.

It is found in the cytoplasm. The enzyme catalyses dUMP + (6R)-5,10-methylene-5,6,7,8-tetrahydrofolate = 7,8-dihydrofolate + dTMP. The protein operates within pyrimidine metabolism; dTTP biosynthesis. Its function is as follows. Catalyzes the reductive methylation of 2'-deoxyuridine-5'-monophosphate (dUMP) to 2'-deoxythymidine-5'-monophosphate (dTMP) while utilizing 5,10-methylenetetrahydrofolate (mTHF) as the methyl donor and reductant in the reaction, yielding dihydrofolate (DHF) as a by-product. This enzymatic reaction provides an intracellular de novo source of dTMP, an essential precursor for DNA biosynthesis. The protein is Thymidylate synthase of Xanthomonas axonopodis pv. citri (strain 306).